The chain runs to 326 residues: Malate dehydrogenase (326 aa).

12–18 (GAAGQIA) contributes to the NAD(+) binding site. Substrate-binding residues include Arg93 and Arg99. NAD(+) contacts are provided by residues Asn106, Gln113, and 130-132 (VGN). Asn132 and Arg163 together coordinate substrate. Residue His188 is the Proton acceptor of the active site.

The protein belongs to the LDH/MDH superfamily. MDH type 2 family.

The catalysed reaction is (S)-malate + NAD(+) = oxaloacetate + NADH + H(+). Functionally, catalyzes the reversible oxidation of malate to oxaloacetate. The polypeptide is Malate dehydrogenase (Corynebacterium diphtheriae (strain ATCC 700971 / NCTC 13129 / Biotype gravis)).